Reading from the N-terminus, the 476-residue chain is Growth/differentiation factor 10 (476 aa).

Residues 1 to 29 (MAPGPARISLGSQLLPMVPLLLLLRGAGC) form the signal peptide. Positions 30–366 (GHRGPSWSSL…EKTMQKARRR (337 aa)) are excised as a propeptide. The tract at residues 39–63 (LPSAAAGLQGDRDSQQSPGDAAAAL) is disordered. Asn114, Asn152, and Asn277 each carry an N-linked (GlcNAc...) asparagine glycan. The interval 268-301 (GDFEPGAAPNSSADPRVRRAAQVSKPLQDNELPG) is disordered. 3 disulfides stabilise this stretch: Cys374–Cys441, Cys403–Cys473, and Cys407–Cys475. A glycan (N-linked (GlcNAc...) asparagine) is linked at Asn467.

Belongs to the TGF-beta family. In terms of assembly, homodimer or heterodimer. Can form a non-covalent complex of the mature region and the pro-region. Highly expressed in epididymal adipose tissue, brain, bone and aorta and to a lesser extent in liver and spleen. Expressed at higher levels in preadipocytes than in mature adipocytes. Strongly expressed in glial cells of the cerebellum.

The protein resides in the secreted. In terms of biological role, growth factor involved in osteogenesis and adipogenesis. Plays an inhibitory role in the process of osteoblast differentiation via SMAD2/3 pathway. Plays an inhibitory role in the process of adipogenesis. The polypeptide is Growth/differentiation factor 10 (Mus musculus (Mouse)).